Here is a 243-residue protein sequence, read N- to C-terminus: R-spondin-2 (243 aa).

The N-terminal stretch at 1–21 (MQFRLFSFALIILNCMDYSHC) is a signal peptide. 11 cysteine pairs are disulfide-bonded: cysteine 40–cysteine 46, cysteine 43–cysteine 52, cysteine 55–cysteine 74, cysteine 78–cysteine 93, cysteine 96–cysteine 104, cysteine 101–cysteine 110, cysteine 113–cysteine 124, cysteine 128–cysteine 141, cysteine 145–cysteine 187, cysteine 156–cysteine 163, and cysteine 196–cysteine 203. The stretch at 90–134 (MNRCARCRIENCDSCFSKDFCTKCKVGFYLHRGRCFDECPDGFAP) is one FU repeat. One can recognise a TSP type-1 domain in the interval 144–204 (GCEVGHWSEW…RCKMTMRHCP (61 aa)). The N-linked (GlcNAc...) asparagine glycan is linked to asparagine 160. Positions 204–224 (PGGKRTPKAKEKRNKKKKRKL) are enriched in basic residues. The segment at 204–243 (PGGKRTPKAKEKRNKKKKRKLIERAQEQHSVFLATDRANQ) is disordered.

The protein belongs to the R-spondin family. As to quaternary structure, interacts with WNT1. Binds heparin. Interacts with LGR4, LGR5 and LGR6. Interacts with E3 ubiquitin ligases RNF43 and ZNRF3.

Its subcellular location is the secreted. In terms of biological role, activator of the canonical Wnt signaling pathway by acting as a ligand for LGR4-6 receptors. Upon binding to LGR4-6 (LGR4, LGR5 or LGR6), LGR4-6 associate with phosphorylated LRP6 and frizzled receptors that are activated by extracellular Wnt receptors, triggering the canonical Wnt signaling pathway to increase expression of target genes. Also regulates the canonical Wnt/beta-catenin-dependent pathway and non-canonical Wnt signaling by acting as an inhibitor of ZNRF3, an important regulator of the Wnt signaling pathway. During embryonic development, plays a crucial role in limb specification, amplifying the Wnt signaling pathway independently of LGR4-6 receptors, possibly by acting as a direct antagonistic ligand to RNF43 and ZNRF3, hence governing the number of limbs an embryo should form. The protein is R-spondin-2 (RSPO2) of Homo sapiens (Human).